Reading from the N-terminus, the 718-residue chain is Neutral ceramidase B (718 aa).

The N-terminal stretch at 1-20 is a signal peptide; sequence MINSFKKLIILISLVIILLS. Asparagine 224 and asparagine 252 each carry an N-linked (GlcNAc...) asparagine glycan. The Nucleophile role is filled by serine 298. N-linked (GlcNAc...) asparagine glycans are attached at residues asparagine 358, asparagine 378, asparagine 391, asparagine 421, asparagine 422, asparagine 577, asparagine 610, and asparagine 614.

Belongs to the neutral ceramidase family.

It is found in the secreted. It catalyses the reaction an N-acylsphing-4-enine + H2O = sphing-4-enine + a fatty acid. Its function is as follows. Hydrolyzes the sphingolipid ceramide into sphingosine and free fatty acid. This is Neutral ceramidase B (dcd2B) from Dictyostelium discoideum (Social amoeba).